The following is a 638-amino-acid chain: ATP-dependent zinc metalloprotease FtsH (638 aa).

The Cytoplasmic portion of the chain corresponds to 1-15 (MDNNHKGPNDPNSKK). Residues 16 to 36 (PLLQNPLLLIAIFGIIIFVAM) traverse the membrane as a helical segment. Topologically, residues 37–122 (RVMNSDEGFG…INYSGFSESN (86 aa)) are periplasmic. A helical transmembrane segment spans residues 123 to 143 (FFADILGWLLPVLVILGLWMF). Residues 144-638 (MASRMQKNMG…RLVPLEEHAS (495 aa)) are Cytoplasmic-facing. 216–223 (GPPGTGKT) contributes to the ATP binding site. H440 serves as a coordination point for Zn(2+). Residue E441 is part of the active site. 2 residues coordinate Zn(2+): H444 and D517.

It in the central section; belongs to the AAA ATPase family. This sequence in the C-terminal section; belongs to the peptidase M41 family. As to quaternary structure, homohexamer. It depends on Zn(2+) as a cofactor.

Its subcellular location is the cell inner membrane. In terms of biological role, acts as a processive, ATP-dependent zinc metallopeptidase for both cytoplasmic and membrane proteins. Plays a role in the quality control of integral membrane proteins. In Helicobacter felis (strain ATCC 49179 / CCUG 28539 / NCTC 12436 / CS1), this protein is ATP-dependent zinc metalloprotease FtsH.